Here is a 292-residue protein sequence, read N- to C-terminus: ATP synthase gamma chain (292 aa).

This sequence belongs to the ATPase gamma chain family. In terms of assembly, F-type ATPases have 2 components, CF(1) - the catalytic core - and CF(0) - the membrane proton channel. CF(1) has five subunits: alpha(3), beta(3), gamma(1), delta(1), epsilon(1). CF(0) has three main subunits: a, b and c.

Its subcellular location is the cell membrane. Its function is as follows. Produces ATP from ADP in the presence of a proton gradient across the membrane. The gamma chain is believed to be important in regulating ATPase activity and the flow of protons through the CF(0) complex. The protein is ATP synthase gamma chain of Streptococcus pneumoniae (strain JJA).